A 146-amino-acid chain; its full sequence is uncharacterized protein (146 aa).

5 helical membrane passes run 5 to 27 (GAMV…YGLA), 32 to 49 (FVYV…YIIL), 61 to 80 (LAVM…FFSG), 90 to 108 (SLGL…ARVF), and 120 to 142 (FFLK…MLFL).

The protein resides in the cell membrane. This is an uncharacterized protein from Archaeoglobus fulgidus (strain ATCC 49558 / DSM 4304 / JCM 9628 / NBRC 100126 / VC-16).